Consider the following 804-residue polypeptide: Phenylalanine--tRNA ligase beta subunit (804 aa).

The region spanning Ala39–Tyr155 is the tRNA-binding domain. Residues Arg408–Ser483 form the B5 domain. Mg(2+) contacts are provided by Asp461, Asp467, Glu470, and Glu471. One can recognise an FDX-ACB domain in the interval Pro711 to Arg804.

The protein belongs to the phenylalanyl-tRNA synthetase beta subunit family. Type 1 subfamily. In terms of assembly, tetramer of two alpha and two beta subunits. Mg(2+) serves as cofactor.

It localises to the cytoplasm. The enzyme catalyses tRNA(Phe) + L-phenylalanine + ATP = L-phenylalanyl-tRNA(Phe) + AMP + diphosphate + H(+). The polypeptide is Phenylalanine--tRNA ligase beta subunit (Lactobacillus johnsonii (strain CNCM I-12250 / La1 / NCC 533)).